The sequence spans 70 residues: Large ribosomal subunit protein uL29 (70 aa).

It belongs to the universal ribosomal protein uL29 family.

The sequence is that of Large ribosomal subunit protein uL29 from Gloeobacter violaceus (strain ATCC 29082 / PCC 7421).